The sequence spans 279 residues: Aldo-keto reductase Mvan_2161 (279 aa).

Catalysis depends on tyrosine 54, which acts as the Proton donor. Residues leucine 194, valine 196, isoleucine 232, arginine 234, serine 235, arginine 240, serine 243, asparagine 244, and arginine 270 each contribute to the NADPH site.

Belongs to the aldo/keto reductase family.

The chain is Aldo-keto reductase Mvan_2161 from Mycolicibacterium vanbaalenii (strain DSM 7251 / JCM 13017 / BCRC 16820 / KCTC 9966 / NRRL B-24157 / PYR-1) (Mycobacterium vanbaalenii).